An 809-amino-acid chain; its full sequence is Glycerol-3-phosphate acyltransferase (809 aa).

An HXXXXD motif motif is present at residues 306 to 311; sequence HRSHMD.

This sequence belongs to the GPAT/DAPAT family.

Its subcellular location is the cell inner membrane. It catalyses the reaction sn-glycerol 3-phosphate + an acyl-CoA = a 1-acyl-sn-glycero-3-phosphate + CoA. The protein operates within phospholipid metabolism; CDP-diacylglycerol biosynthesis; CDP-diacylglycerol from sn-glycerol 3-phosphate: step 1/3. The chain is Glycerol-3-phosphate acyltransferase from Vibrio vulnificus (strain YJ016).